The sequence spans 292 residues: Rab effector Noc2 (292 aa).

The region spanning 41-158 (QRKSQSLSPA…KRSGAWFYKG (118 aa)) is the RabBD domain. An FYVE-type zinc finger spans residues 89–146 (GNGLSQCLLCGEVLGFLGSSSVFCKDCRKKVCTKCGIEASPSQKRPLWLCKICSEQRE). Residues C95, C98, C112, C115, C120, C123, C138, and C141 each coordinate Zn(2+). Residues 175-292 (PSFRPLPVEP…RTLAGPRGPR (118 aa)) form a disordered region. The segment covering 221 to 235 (LDDRLRPAGVRDPKG) has biased composition (basic and acidic residues). Residue S248 is modified to Phosphoserine. Residues 257–269 (ASCLSGSQSSLAS) are compositionally biased toward low complexity.

As to quaternary structure, recruited to dense-core vesicles through specific interaction with RAB27A in endocrine cells. Interacts with RAB3A, RAB3B, RAB3C and RAB3D. Interacts with ZYX.

The protein localises to the cytoplasm. Its subcellular location is the cytoplasmic vesicle. It localises to the secretory vesicle membrane. Its function is as follows. Rab GTPase effector involved in the late steps of regulated exocytosis, both in endocrine and exocrine cells. The sequence is that of Rab effector Noc2 (RPH3AL) from Bos taurus (Bovine).